Consider the following 285-residue polypeptide: 2,4-didehydro-3-deoxy-L-rhamnonate hydrolase (285 aa).

L73 lines the pyruvate pocket. Mg(2+) contacts are provided by E119, E121, and D150. K168 and T238 together coordinate pyruvate.

It belongs to the FAH family. Homodimer. Mg(2+) is required as a cofactor.

The enzyme catalyses 2,4-didehydro-3-deoxy-L-rhamnonate + H2O = (S)-lactate + pyruvate + H(+). It functions in the pathway carbohydrate degradation; L-rhamnose degradation. Its function is as follows. Hydrolase that catalyzes the hydrolysis of 2,4-didehydro-3-deoxy-L-rhamnonate to pyruvate and L-lactate. Can also hydrolyze L-2,4-diketo-3-deoxylyxonate and L-2,4-diketo-3-deoxymannonate. In vitro can also use acylpyruvates such as acetylpyruvate and trimethylacetopyruvate. Catalyzes the fifth (last) step in an alternative pathway for rhamnose utilization that does not involve phosphorylated intermediates. This is 2,4-didehydro-3-deoxy-L-rhamnonate hydrolase from Sphingomonas sp. (strain SKA58).